The primary structure comprises 1460 residues: Centrosomal protein of 164 kDa (1460 aa).

Positions 1-194 (MAGRPLRIGD…PSQGLKTSAY (194 aa)) are interaction with ATRIP. Residues 56 to 89 (APLPGEWKPCQDITGDIYYFNFANGQSMWDHPCD) enclose the WW domain. A disordered region spans residues 107–135 (GAIKKKKKKKEKKDKKDRDPPKSSLALGS). Residues 109 to 119 (IKKKKKKKEKK) are compositionally biased toward basic residues. Residue Ser186 is modified to Phosphoserine; by ATR and ATM. Ser201 is modified (phosphoserine). 3 disordered regions span residues 213–412 (GLGE…HGLD), 440–593 (AQQP…AALK), and 658–719 (EEAR…QKNR). The span at 217 to 227 (ETNEEDEEESD) shows a compositional bias: acidic residues. Residues 256–270 (ESLRTSQPEEKKDVS) show a composition bias toward basic and acidic residues. A compositionally biased stretch (low complexity) spans 285-296 (SSPGADSSLSSA). Composition is skewed to basic and acidic residues over residues 310-323 (LPEK…EPKI) and 357-367 (EGSRREEAAKE). Residues 453-464 (QSSQDELQSKQS) are compositionally biased toward low complexity. A compositionally biased stretch (basic and acidic residues) spans 465–481 (KGLEERLSPPLPHEERA). A compositionally biased stretch (low complexity) spans 514 to 525 (SAASLSLQLSLQ). A compositionally biased stretch (basic and acidic residues) spans 537-546 (EKGKEQHSQA). A Phosphoserine modification is found at Ser566. Basic and acidic residues-rich tracts occupy residues 658–668 (EEARMREEESQ) and 686–719 (DQIR…QKNR). Residues 1154 to 1206 (GIKALEDMRKNLEKETRHLDEMKSAMRKGHNLLKKKEEKLNQLESSLWEEASD) are a coiled coil. The tract at residues 1290–1310 (PPPLLASMPAQLPPRDPKSTP) is disordered. Residues Ser1386, Ser1388, and Ser1443 each carry the phosphoserine modification.

In terms of assembly, interacts (via N-terminus) with ATRIP. Interacts with ATM, ATR and MDC1. Interacts with XPA (via N-terminus) upon UV irradiation. Interacts with CEP83, CCDC92, TTBK2, DVL3, NPHP3 and weakly with NPHP4. Interacts with DZIP1. Phosphorylation at Ser-186 is induced upon DNA-damage caused by treatment with IR irradiation, UV irradiation, hydroxyurea or amphidicolin. Also MDC1-mediated chromatin remodeling is critical for DNA damage-induced phosphorylation. Expressed in several cell lines.

The protein resides in the cytoplasm. It is found in the cytoskeleton. It localises to the microtubule organizing center. Its subcellular location is the centrosome. The protein localises to the centriole. The protein resides in the nucleus. Functionally, plays a role in microtubule organization and/or maintenance for the formation of primary cilia (PC), a microtubule-based structure that protrudes from the surface of epithelial cells. Plays a critical role in G2/M checkpoint and nuclear divisions. A key player in the DNA damage-activated ATR/ATM signaling cascade since it is required for the proper phosphorylation of H2AX, RPA, CHEK2 and CHEK1. Plays a critical role in chromosome segregation, acting as a mediator required for the maintenance of genomic stability through modulation of MDC1, RPA and CHEK1. The chain is Centrosomal protein of 164 kDa (CEP164) from Homo sapiens (Human).